The following is a 206-amino-acid chain: Protein Nef (206 aa).

Gly-2 carries N-myristoyl glycine; by host lipidation. Residue Ser-6 is modified to Phosphoserine; by host. The segment at 62–65 (EEEK) is acidic; interacts with host PACS1 and PACS2; stabilizes the interaction of NEF/MHC-I with host AP1M1; necessary for MHC-I internalization. The tract at residues 69–78 (PVTPQVPLRP) is SH3-binding; interaction with Src family tyrosine kinases. The PxxP; stabilizes the interaction of NEF/MHC-I with host AP1M1; necessary for MHC-I internalization signature appears at 72–75 (PQVP). A mediates dimerization, Nef-PTE1 interaction region spans residues 108 to 124 (DILDLWIYHTQGYFPDW). The interval 148-180 (VEPEKLEEANKGENTSLLHPVSLHGMDDPEREV) is binding to ATP6V1H. A Dileucine internalization motif; necessary for CD4 internalization motif is present at residues 164-165 (LL). Positions 174–175 (DD) match the Diacidic; necessary for CD4 internalization motif.

This sequence belongs to the lentivirus primate group Nef protein family. As to quaternary structure, monomer; cytosolic form. Homodimer; membrane bound form. Interacts with Nef associated p21-activated kinase (PAK2); this interaction activates PAK2. Associates with the Nef-MHC-I-AP1 complex; this complex is required for MHC-I internalization. Interacts (via C-terminus) with host PI3-kinase. Interacts with host PACS1; this interaction seems to be weak. Interacts with host PACS2. Interacts with host LCK and MAPK3; these interactions inhibit the kinase activity of the latter. Interacts with host ATP6V1H; this interaction may play a role in CD4 endocytosis. Associates with the CD4-Nef-AP2 complex; this complex is required for CD4 internalization. Interacts with host AP2 subunit alpha and AP2 subunit sigma2. Interacts with TCR-zeta chain; this interaction up-regulates the Fas ligand (FasL) surface expression. Interacts with host HCK, LYN, and SRC; these interactions activate the Src family kinases. Interacts with MAP3K5; this interaction inhibits the Fas and TNFR-mediated death signals. Interacts with beta-COP and PTE1. Interacts with human RACK1; this increases Nef phosphorylation by PKC. Interacts with TP53; this interaction decreases the half-life of TP53, protecting the infected cell against p53-mediated apoptosis. In terms of processing, the virion-associated Nef proteins are cleaved by the viral protease to release the soluble C-terminal core protein. Nef is probably cleaved concomitantly with viral structural proteins on maturation of virus particles. Myristoylated. Post-translationally, phosphorylated on serine residues, probably by host PKCdelta and theta.

The protein resides in the host cell membrane. Its subcellular location is the virion. It localises to the secreted. It is found in the host Golgi apparatus membrane. Factor of infectivity and pathogenicity, required for optimal virus replication. Alters numerous pathways of T-lymphocyte function and down-regulates immunity surface molecules in order to evade host defense and increase viral infectivity. Alters the functionality of other immunity cells, like dendritic cells, monocytes/macrophages and NK cells. In terms of biological role, in infected CD4(+) T-lymphocytes, down-regulates the surface MHC-I, mature MHC-II, CD4, CD28, CCR5 and CXCR4 molecules. Mediates internalization and degradation of host CD4 through the interaction of with the cytoplasmic tail of CD4, the recruitment of AP-2 (clathrin adapter protein complex 2), internalization through clathrin coated pits, and subsequent transport to endosomes and lysosomes for degradation. Diverts host MHC-I molecules to the trans-Golgi network-associated endosomal compartments by an endocytic pathway to finally target them for degradation. MHC-I down-regulation may involve AP-1 (clathrin adapter protein complex 1) or possibly Src family kinase-ZAP70/Syk-PI3K cascade recruited by PACS2. In consequence infected cells are masked for immune recognition by cytotoxic T-lymphocytes. Decreasing the number of immune receptors also prevents reinfection by more HIV particles (superinfection). Down-regulates host SERINC3 and SERINC5 thereby excluding these proteins from the viral particles. Virion infectivity is drastically higher when SERINC3 or SERINC5 are excluded from the viral envelope, because these host antiviral proteins impair the membrane fusion event necessary for subsequent virion penetration. Its function is as follows. Bypasses host T-cell signaling by inducing a transcriptional program nearly identical to that of anti-CD3 cell activation. Interaction with TCR-zeta chain up-regulates the Fas ligand (FasL). Increasing surface FasL molecules and decreasing surface MHC-I molecules on infected CD4(+) cells send attacking cytotoxic CD8+ T-lymphocytes into apoptosis. Functionally, plays a role in optimizing the host cell environment for viral replication without causing cell death by apoptosis. Protects the infected cells from apoptosis in order to keep them alive until the next virus generation is ready to strike. Inhibits the Fas and TNFR-mediated death signals by blocking MAP3K5/ASK1. Decreases the half-life of TP53, protecting the infected cell against p53-mediated apoptosis. Inhibits the apoptotic signals regulated by the Bcl-2 family proteins through the formation of a Nef/PI3-kinase/PAK2 complex that leads to activation of PAK2 and induces phosphorylation of host BAD. Extracellular Nef protein targets CD4(+) T-lymphocytes for apoptosis by interacting with CXCR4 surface receptors. This Homo sapiens (Human) protein is Protein Nef.